Reading from the N-terminus, the 59-residue chain is Large ribosomal subunit protein bL33 (59 aa).

It belongs to the bacterial ribosomal protein bL33 family.

The protein is Large ribosomal subunit protein bL33 of Borreliella afzelii (strain PKo) (Borrelia afzelii).